The chain runs to 137 residues: Proofreading thioesterase EntH (137 aa).

The active-site Nucleophile or proton acceptor is the E63.

This sequence belongs to the thioesterase PaaI family. As to quaternary structure, homotetramer. Dimer of dimers. Interacts specifically with the aryl carrier protein (ArCP) domain of EntB.

It is found in the cytoplasm. The protein operates within siderophore biosynthesis; enterobactin biosynthesis. Its function is as follows. Required for optimal enterobactin synthesis. Acts as a proofreading enzyme that prevents EntB misacylation by hydrolyzing the thioester bound existing between EntB and wrongly charged molecules. This chain is Proofreading thioesterase EntH, found in Enterobacter lignolyticus (strain SCF1).